The primary structure comprises 122 residues: Large ribosomal subunit protein uL14 (122 aa).

This sequence belongs to the universal ribosomal protein uL14 family. In terms of assembly, part of the 50S ribosomal subunit. Forms a cluster with proteins L3 and L19. In the 70S ribosome, L14 and L19 interact and together make contacts with the 16S rRNA in bridges B5 and B8.

Binds to 23S rRNA. Forms part of two intersubunit bridges in the 70S ribosome. In Solibacter usitatus (strain Ellin6076), this protein is Large ribosomal subunit protein uL14.